The chain runs to 391 residues: UDP-galactose transporter homolog 1 (391 aa).

The next 5 membrane-spanning stretches (helical) occupy residues L3–L23, L52–V72, Y126–I147, Y178–P198, and A207–G227. The N-linked (GlcNAc...) asparagine glycan is linked to N230. 4 consecutive transmembrane segments (helical) span residues M250 to I270, D298 to E318, L323 to V343, and E347 to A367.

It belongs to the nucleotide-sugar transporter family. SLC35B subfamily.

Its subcellular location is the endoplasmic reticulum membrane. In terms of biological role, may be involved in specific transport of UDP-Gal from the cytosol to the Golgi lumen. Involved in the maintenance of optimal conditions for the folding of secretory pathway proteins in the endoplasmic reticulum. The chain is UDP-galactose transporter homolog 1 (HUT1) from Mycosarcoma maydis (Corn smut fungus).